The following is a 218-amino-acid chain: Small ribosomal subunit protein uS3c (218 aa).

Residues 43 to 118 enclose the KH type-2 domain; the sequence is IKNYVQKNPR…RLNIAIARIS (76 aa).

Belongs to the universal ribosomal protein uS3 family. Part of the 30S ribosomal subunit.

It is found in the plastid. Its subcellular location is the chloroplast. The sequence is that of Small ribosomal subunit protein uS3c (rps3) from Acorus calamus (Sweet flag).